An 88-amino-acid chain; its full sequence is Conotoxin tx9a (88 aa).

The signal sequence occupies residues 1–27 (MHLSLARSAVLMLLLLFALGNFVVVQS). A propeptide spanning residues 28–58 (GQITRDVDNGQLTDNRRNLQSKWKPVSLYMS) is cleaved from the precursor. 3 cysteine pairs are disulfide-bonded: cysteine 62–cysteine 76, cysteine 66–cysteine 78, and cysteine 72–cysteine 83. A 4-carboxyglutamate; partial mark is found at glutamate 68 and glutamate 73. Asparagine 87 is subject to Asparagine amide.

Exists in 4 different forms, depending on gamma-carboxyglutamations. Tx9a-EE does not contain gamma-carboxyglutamate, tx9a-E/gamma has one gamma-carboxyglutamate at position 73, tx9a-gamma/E has one gamma-carboxyglutamate at position 68, and tx9a-agmma/gamma has two gamma-carboxyglutamates at positions 68 and 73. As to expression, expressed by the venom duct. All different gamma-carboxyalted forms are mostly present in part 2, part 3 and part 4 of the venom duct. They are also found in part 1 (proximal part near the venom bulb) and part 5, but in lower quantity.

The protein localises to the secreted. In terms of biological role, neurotoxin. In vivo, intracranial injection into mice of 10 pmol/g of the peptide induces running in circles and hyperactivity. At higher doses (50 pmol/g), the mice exhibit running and climbing symptoms for close to one hour. Between 130 and 150 pmol/g, characteristic 'spasmodic' symptomatology is elicited. A hand clap would make mice jump high and start running rapidly. When exposed to a loud hand clap, or if the cage cover were dropped, the mice lose motor control and exhibit seizure-like symptoms from which they eventually recover. At the highest doses tested (over 250 pmol/g), after the characteristic spasmodic symptomatology, lethality occurs. Injection of a similar dose range intramuscularly into Siamese fighting fish elicited no unusual symptomatology. This Conus textile (Cloth-of-gold cone) protein is Conotoxin tx9a.